We begin with the raw amino-acid sequence, 505 residues long: MEEFQRHIELDRSWQHNFLYPLIFQEYIYAFAYDHGLNKSILLENSGDKKYSLLIVKRLITRMYQQNHLILSANDSNQNAILGHKQKNNLYSQMITEGFAVIVEIPFSLLLISSLGEKKIVKSHNLRSIHSIFPFLEDKLLHLNYVLDILITYPAHLEILVQTLRYWVKDASSLHLLRFFLYEYRNLNSLITPNQLISFLKKRNQRLFLFLYNFHVCEYESLFVFLCNQSSYLRSTSFGALIERIYFYGKLKYLVKVFTKDFGVILWLFREPFPHYVRYQGKSILASKGTSLLMHKWKYYLIYFGQCHFSVWSQPKRLYINRLSNHSLDFMGFLSSVRLNSSVIRSQMLENSFLIENISKKFDTIVPIIPLVGSLAKAKFCNVLGHPISKSVWTDLSDSDILDRFGRICRNISHYYSGSSRXXXXXXXXXXXRIFCARTLSGKHKSTVRAFLNRLRSEFLEEFFTEEEKVLSLILPRDSSISRGLYRGRIWYLDIICIHNLANDE.

Belongs to the intron maturase 2 family. MatK subfamily.

The protein resides in the plastid. It is found in the chloroplast. Usually encoded in the trnK tRNA gene intron. Probably assists in splicing its own and other chloroplast group II introns. This is Maturase K from Blitum bonus-henricus (Good King Henry).